The chain runs to 218 residues: uncharacterized protein (218 aa).

Transmembrane regions (helical) follow at residues 27–49 (IALE…GFLA), 57–77 (GGVL…GYWV), 115–135 (VFFG…AGIV), 142–162 (FLLY…SLAY), and 180–200 (FSWF…VFHF).

It belongs to the DedA family.

Its subcellular location is the cell membrane. This is an uncharacterized protein from Synechocystis sp. (strain ATCC 27184 / PCC 6803 / Kazusa).